We begin with the raw amino-acid sequence, 912 residues long: Protein translocase subunit SecA (912 aa).

Residues glutamine 87, 105-109, and aspartate 508 contribute to the ATP site; that span reads GEGKT. The segment at 864–912 is disordered; the sequence is AEEEVEQMQGGNAPVPVSQVTRDEPKVGRNDPCPCGSGKKYKHCHGQLS. Zn(2+) contacts are provided by cysteine 896, cysteine 898, cysteine 907, and histidine 908. Residues 902–912 are compositionally biased toward basic residues; sequence KKYKHCHGQLS.

The protein belongs to the SecA family. As to quaternary structure, monomer and homodimer. Part of the essential Sec protein translocation apparatus which comprises SecA, SecYEG and auxiliary proteins SecDF-YajC and YidC. Requires Zn(2+) as cofactor.

The protein resides in the cell inner membrane. The protein localises to the cytoplasm. The catalysed reaction is ATP + H2O + cellular proteinSide 1 = ADP + phosphate + cellular proteinSide 2.. Its function is as follows. Part of the Sec protein translocase complex. Interacts with the SecYEG preprotein conducting channel. Has a central role in coupling the hydrolysis of ATP to the transfer of proteins into and across the cell membrane, serving both as a receptor for the preprotein-SecB complex and as an ATP-driven molecular motor driving the stepwise translocation of polypeptide chains across the membrane. In Xanthomonas euvesicatoria pv. vesicatoria (strain 85-10) (Xanthomonas campestris pv. vesicatoria), this protein is Protein translocase subunit SecA.